A 109-amino-acid polypeptide reads, in one-letter code: Large ribosomal subunit protein uL22 (109 aa).

It belongs to the universal ribosomal protein uL22 family. As to quaternary structure, part of the 50S ribosomal subunit.

Functionally, this protein binds specifically to 23S rRNA; its binding is stimulated by other ribosomal proteins, e.g. L4, L17, and L20. It is important during the early stages of 50S assembly. It makes multiple contacts with different domains of the 23S rRNA in the assembled 50S subunit and ribosome. In terms of biological role, the globular domain of the protein is located near the polypeptide exit tunnel on the outside of the subunit, while an extended beta-hairpin is found that lines the wall of the exit tunnel in the center of the 70S ribosome. In Aromatoleum aromaticum (strain DSM 19018 / LMG 30748 / EbN1) (Azoarcus sp. (strain EbN1)), this protein is Large ribosomal subunit protein uL22.